We begin with the raw amino-acid sequence, 593 residues long: ABC transporter F family member 2 (593 aa).

The segment covering 1-10 has biased composition (basic residues); it reads MAKKGGKNNK. A disordered region spans residues 1–25; sequence MAKKGGKNNKSKKEVTPPTSDVEDE. ABC transporter domains follow at residues 53 to 294 and 364 to 583; these read VKIE…VNQM and MHFD…RDLT. Residues 85 to 92 and 399 to 406 each bind ATP; these read GQNGCGKS and GPNGAGKS.

It belongs to the ABC transporter superfamily. ABCF family. EF3 subfamily.

This chain is ABC transporter F family member 2 (abcF2), found in Dictyostelium discoideum (Social amoeba).